Reading from the N-terminus, the 444-residue chain is C4-dicarboxylate transport protein 2 (444 aa).

The next 6 helical transmembrane spans lie at 23–43, 61–81, 95–115, 162–182, 198–218, and 236–256; these read ILYV…WLWP, LIKM…IAHI, LVYF…VANV, GEIL…MGLG, AMFG…FGAM, and LIAT…GIIA.

Belongs to the dicarboxylate/amino acid:cation symporter (DAACS) (TC 2.A.23) family.

The protein localises to the cell inner membrane. In terms of biological role, responsible for the transport of dicarboxylates such as succinate, fumarate, and malate from the periplasm across the membrane. The sequence is that of C4-dicarboxylate transport protein 2 from Bradyrhizobium diazoefficiens (strain JCM 10833 / BCRC 13528 / IAM 13628 / NBRC 14792 / USDA 110).